We begin with the raw amino-acid sequence, 222 residues long: Phosphoribosylformylglycinamidine synthase subunit PurQ (222 aa).

One can recognise a Glutamine amidotransferase type-1 domain in the interval 2-222 (RTAVIQFPGS…FESLKGALVQ (221 aa)). Cys-87 acts as the Nucleophile in catalysis. Residues His-195 and Glu-197 contribute to the active site.

As to quaternary structure, part of the FGAM synthase complex composed of 1 PurL, 1 PurQ and 2 PurS subunits.

The protein localises to the cytoplasm. It catalyses the reaction N(2)-formyl-N(1)-(5-phospho-beta-D-ribosyl)glycinamide + L-glutamine + ATP + H2O = 2-formamido-N(1)-(5-O-phospho-beta-D-ribosyl)acetamidine + L-glutamate + ADP + phosphate + H(+). It carries out the reaction L-glutamine + H2O = L-glutamate + NH4(+). It participates in purine metabolism; IMP biosynthesis via de novo pathway; 5-amino-1-(5-phospho-D-ribosyl)imidazole from N(2)-formyl-N(1)-(5-phospho-D-ribosyl)glycinamide: step 1/2. Its function is as follows. Part of the phosphoribosylformylglycinamidine synthase complex involved in the purines biosynthetic pathway. Catalyzes the ATP-dependent conversion of formylglycinamide ribonucleotide (FGAR) and glutamine to yield formylglycinamidine ribonucleotide (FGAM) and glutamate. The FGAM synthase complex is composed of three subunits. PurQ produces an ammonia molecule by converting glutamine to glutamate. PurL transfers the ammonia molecule to FGAR to form FGAM in an ATP-dependent manner. PurS interacts with PurQ and PurL and is thought to assist in the transfer of the ammonia molecule from PurQ to PurL. The polypeptide is Phosphoribosylformylglycinamidine synthase subunit PurQ (Deinococcus geothermalis (strain DSM 11300 / CIP 105573 / AG-3a)).